The primary structure comprises 511 residues: D-alanine--D-alanyl carrier protein ligase (511 aa).

152–153 (TS) contributes to the ATP binding site. Position 199 (D199) interacts with D-alanine. ATP is bound at residue 294–299 (NAYGPT). Residue V303 coordinates D-alanine. ATP is bound by residues D385, 397 to 400 (YGGR), and K499. K499 lines the D-alanine pocket.

This sequence belongs to the ATP-dependent AMP-binding enzyme family. DltA subfamily.

The protein resides in the cytoplasm. The catalysed reaction is holo-[D-alanyl-carrier protein] + D-alanine + ATP = D-alanyl-[D-alanyl-carrier protein] + AMP + diphosphate. Its pathway is cell wall biogenesis; lipoteichoic acid biosynthesis. Catalyzes the first step in the D-alanylation of lipoteichoic acid (LTA), the activation of D-alanine and its transfer onto the D-alanyl carrier protein (Dcp) DltC. In an ATP-dependent two-step reaction, forms a high energy D-alanyl-AMP intermediate, followed by transfer of the D-alanyl residue as a thiol ester to the phosphopantheinyl prosthetic group of the Dcp. D-alanylation of LTA plays an important role in modulating the properties of the cell wall in Gram-positive bacteria, influencing the net charge of the cell wall. This Streptococcus agalactiae serotype III (strain NEM316) protein is D-alanine--D-alanyl carrier protein ligase.